The primary structure comprises 434 residues: Adenylosuccinate synthetase (434 aa).

GTP contacts are provided by residues 25 to 31 and 53 to 55; these read GDEGKGK and GHT. D26 serves as the catalytic Proton acceptor. Residues D26 and G53 each coordinate Mg(2+). Residues 26–29, 51–54, T142, R156, N233, T248, and R312 contribute to the IMP site; these read DEGK and NAGH. H54 serves as the catalytic Proton donor. A substrate-binding site is contributed by 308–314; the sequence is VTTGRKR. GTP contacts are provided by residues R314, 340–342, and 422–424; these read KLD and GVG.

Belongs to the adenylosuccinate synthetase family. Homodimer. Mg(2+) serves as cofactor.

It is found in the cytoplasm. It catalyses the reaction IMP + L-aspartate + GTP = N(6)-(1,2-dicarboxyethyl)-AMP + GDP + phosphate + 2 H(+). The protein operates within purine metabolism; AMP biosynthesis via de novo pathway; AMP from IMP: step 1/2. Its activity is regulated as follows. Competitively Inhibited by GMP. Allosterically inhibited by AMP. In terms of biological role, plays an important role in the de novo pathway and in the salvage pathway of purine nucleotide biosynthesis. Catalyzes the first committed step in the biosynthesis of AMP from IMP. This chain is Adenylosuccinate synthetase (ade2), found in Schizosaccharomyces pombe (strain 972 / ATCC 24843) (Fission yeast).